A 167-amino-acid polypeptide reads, in one-letter code: Leptin (167 aa).

The first 21 residues, 1 to 21 (MLCGPLCRFLWLWPYLSYVEA), serve as a signal peptide directing secretion. Cysteine 117 and cysteine 167 are oxidised to a cystine.

It belongs to the leptin family.

The protein localises to the secreted. Key player in the regulation of energy balance and body weight control. Once released into the circulation, has central and peripheral effects by binding LEPR, found in many tissues, which results in the activation of several major signaling pathways. In the hypothalamus, acts as an appetite-regulating factor that induces a decrease in food intake and an increase in energy consumption by inducing anorexinogenic factors and suppressing orexigenic neuropeptides, also regulates bone mass and secretion of hypothalamo-pituitary-adrenal hormones. In the periphery, increases basal metabolism, influences reproductive function, regulates pancreatic beta-cell function and insulin secretion, is pro-angiogenic for endothelial cell and affects innate and adaptive immunity. In the arcuate nucleus of the hypothalamus, activates by depolarization POMC neurons inducing FOS and SOCS3 expression to release anorexigenic peptides and inhibits by hyperpolarization NPY neurons inducing SOCS3 with a consequent reduction on release of orexigenic peptides. In addition to its known satiety inducing effect, has a modulatory role in nutrient absorption. In the intestine, reduces glucose absorption by enterocytes by activating PKC and leading to a sequential activation of p38, PI3K and ERK signaling pathways which exerts an inhibitory effect on glucose absorption. Acts as a growth factor on certain tissues, through the activation of different signaling pathways increases expression of genes involved in cell cycle regulation such as CCND1, via JAK2-STAT3 pathway, or VEGFA, via MAPK1/3 and PI3K-AKT1 pathways. May also play an apoptotic role via JAK2-STAT3 pathway and up-regulation of BIRC5 expression. Pro-angiogenic, has mitogenic activity on vascular endothelial cells and plays a role in matrix remodeling by regulating the expression of matrix metalloproteinases (MMPs) and tissue inhibitors of metalloproteinases (TIMPs). In innate immunity, modulates the activity and function of neutrophils by increasing chemotaxis and the secretion of oxygen radicals. Increases phagocytosis by macrophages and enhances secretion of pro-inflammatory mediators. Increases cytotoxic ability of NK cells. Plays a pro-inflammatory role, in synergy with IL1B, by inducing NOS2 which promotes the production of IL6, IL8 and Prostaglandin E2, through a signaling pathway that involves JAK2, PI3K, MAP2K1/MEK1 and MAPK14/p38. In adaptive immunity, promotes the switch of memory T-cells towards T helper-1 cell immune responses. Increases CD4(+)CD25(-) T-cell proliferation and reduces autophagy during TCR (T-cell receptor) stimulation, through MTOR signaling pathway activation and BCL2 up-regulation. This Felis catus (Cat) protein is Leptin (LEP).